Reading from the N-terminus, the 141-residue chain is Large ribosomal subunit protein uL11 (141 aa).

This sequence belongs to the universal ribosomal protein uL11 family. Part of the ribosomal stalk of the 50S ribosomal subunit. Interacts with L10 and the large rRNA to form the base of the stalk. L10 forms an elongated spine to which L12 dimers bind in a sequential fashion forming a multimeric L10(L12)X complex. One or more lysine residues are methylated.

In terms of biological role, forms part of the ribosomal stalk which helps the ribosome interact with GTP-bound translation factors. In Selenomonas ruminantium, this protein is Large ribosomal subunit protein uL11.